A 97-amino-acid chain; its full sequence is MKTALFLVFALAFIAVEGKFSKACSKPGQTVLAPDGCNHCRCSKNGIIMGCTKKMCPPRTMKQSCKPGATFKHKDGCNTCKCSDDGKSARCTARLCW.

Residues 1–18 form the signal peptide; that stretch reads MKTALFLVFALAFIAVEG. Pacifastin domains lie at 22–59 and 62–97; these read KACSKPGQTVLAPDGCNHCRCSKNGIIMGCTKKMCPPR and KQSCKPGATFKHKDGCNTCKCSDDGKSARCTARLCW. Cystine bridges form between Cys-24-Cys-42, Cys-37-Cys-56, and Cys-40-Cys-51. The pro-Pro-Arg motif necessary for proteolytic processing stretch occupies residues 57 to 59; that stretch reads PPR. 3 cysteine pairs are disulfide-bonded: Cys-65–Cys-82, Cys-77–Cys-96, and Cys-80–Cys-91.

The protein belongs to the protease inhibitor I19 family. Expressed by the venom gland.

Its subcellular location is the secreted. Functionally, inhibits trypsin activity and prophenoloxidase (PPO) activation, an enzyme essential for both clotting and insect innate immune responses. It does not inhibit activity of chymotrypsin and protease K, and has no effect on phenoloxidase (PO) activity. This is U-reduvitoxin-Pr10a from Platymeris rhadamanthus (Red spot assassin bug).